The sequence spans 429 residues: Actin-like protein 6A (429 aa).

Ser-2 is modified (N-acetylserine). A Glycyl lysine isopeptide (Lys-Gly) (interchain with G-Cter in SUMO2) cross-link involves residue Lys-62. Residues Ser-86 and Ser-233 each carry the phosphoserine modification.

Belongs to the actin family. Component of numerous complexes with chromatin remodeling and histone acetyltransferase activity. Component of the NuA4 histone acetyltransferase complex which contains the catalytic subunit KAT5/TIP60 and the subunits EP400, TRRAP/PAF400, BRD8/SMAP, EPC1, DMAP1/DNMAP1, RUVBL1/TIP49, RUVBL2, ING3, actin, ACTL6A/BAF53A, MORF4L1/MRG15, MORF4L2/MRGX, MRGBP, YEATS4/GAS41, VPS72/YL1 and MEAF6. The NuA4 complex interacts with MYC and the adenovirus E1A protein. Component of a NuA4-related complex which contains EP400, TRRAP/PAF400, SRCAP, BRD8/SMAP, EPC1, DMAP1/DNMAP1, RUVBL1/TIP49, RUVBL2, actin, ACTL6A/BAF53A, VPS72 and YEATS4/GAS41. Component of the multiprotein chromatin-remodeling complexes SWI/SNF: SWI/SNF-A (BAF), SWI/SNF-B (PBAF) and related complexes. The canonical complex contains a catalytic subunit (either SMARCA4/BRG1/BAF190A or SMARCA2/BRM/BAF190B) and at least SMARCE1, ACTL6A/BAF53, SMARCC1/BAF155, SMARCC2/BAF170, and SMARCB1/SNF5/BAF47. Other subunits specific to each of the complexes may also be present permitting several possible combinations developmentally and tissue specific. Component of the BAF complex, which includes at least actin (ACTB), ARID1A/BAF250A, ARID1B/BAF250B, SMARCA2/BRM, SMARCA4/BRG1/BAF190A, ACTL6A/BAF53, ACTL6B/BAF53B, SMARCE1/BAF57, SMARCC1/BAF155, SMARCC2/BAF170, SMARCB1/SNF5/INI1, and one or more SMARCD1/BAF60A, SMARCD2/BAF60B, or SMARCD3/BAF60C. In muscle cells, the BAF complex also contains DPF3. Component of the BAF53 complex, at least composed of ACTL6A/BAF53A, RUVBL1/TIP49, SMARCA2/BRM/BAF190B and TRRAP/PAF400, and which may also include a HAT activity related to, but distinct from, that of KAT5. Component of neural progenitors-specific chromatin remodeling complex (npBAF complex) composed of at least, ARID1A/BAF250A or ARID1B/BAF250B, SMARCD1/BAF60A, SMARCD3/BAF60C, SMARCA2/BRM/BAF190B, SMARCA4/BRG1/BAF190A, SMARCB1/BAF47, SMARCC1/BAF155, SMARCE1/BAF57, SMARCC2/BAF170, PHF10/BAF45A, ACTL6A/BAF53A and actin. Component of SWI/SNF (GBAF) subcomplex, which includes at least BICRA or BICRAL (mutually exclusive), BRD9, SS18, SMARCA2/BRM, SMARCA4/BRG1/BAF190A, ACTL6A/BAF53, SMARCC1/BAF155, and SMARCD1/BAF60A. May be a component of the SWI/SNF-B (PBAF) chromatin remodeling complex, at least composed of SMARCA4/BRG1, SMARCB1/BAF47/SNF5, ACTL6A/BAF53A or ACTL6B/BAF53B, SMARCE1/BAF57, SMARCD1/BAF60A, SMARCD2/BAF60B, perhaps SMARCD3/BAF60C, SMARCC1/BAF155, SMARCC2/BAF170, PBRM1/BAF180, ARID2/BAF200 and actin. Interacts with SMARCA4/BRG1/BAF190A. Interacts with PHF10/BAF45A. Component of the chromatin remodeling INO80 complex; specifically part of a complex module associated with the DBINO domain of INO80. Interacts with DPF2. Widely expressed. Expressed selectively in neural stem and progenitor cells (at protein level).

The protein localises to the nucleus. Involved in transcriptional activation and repression of select genes by chromatin remodeling (alteration of DNA-nucleosome topology). Component of SWI/SNF chromatin remodeling complexes that carry out key enzymatic activities, changing chromatin structure by altering DNA-histone contacts within a nucleosome in an ATP-dependent manner. Required for maximal ATPase activity of SMARCA4/BRG1/BAF190A and for association of the SMARCA4/BRG1/BAF190A containing remodeling complex BAF with chromatin/nuclear matrix. Belongs to the neural progenitors-specific chromatin remodeling complex (npBAF complex) and is required for the proliferation of neural progenitors. During neural development a switch from a stem/progenitor to a postmitotic chromatin remodeling mechanism occurs as neurons exit the cell cycle and become committed to their adult state. The transition from proliferating neural stem/progenitor cells to postmitotic neurons requires a switch in subunit composition of the npBAF and nBAF complexes. As neural progenitors exit mitosis and differentiate into neurons, npBAF complexes which contain ACTL6A/BAF53A and PHF10/BAF45A, are exchanged for homologous alternative ACTL6B/BAF53B and DPF1/BAF45B or DPF3/BAF45C subunits in neuron-specific complexes (nBAF). The npBAF complex is essential for the self-renewal/proliferative capacity of the multipotent neural stem cells. The nBAF complex along with CREST plays a role regulating the activity of genes essential for dendrite growth. Component of the NuA4 histone acetyltransferase (HAT) complex which is involved in transcriptional activation of select genes principally by acetylation of nucleosomal histones H4 and H2A. This modification may both alter nucleosome - DNA interactions and promote interaction of the modified histones with other proteins which positively regulate transcription. This complex may be required for the activation of transcriptional programs associated with oncogene and proto-oncogene mediated growth induction, tumor suppressor mediated growth arrest and replicative senescence, apoptosis, and DNA repair. NuA4 may also play a direct role in DNA repair when recruited to sites of DNA damage. Putative core component of the chromatin remodeling INO80 complex which is involved in transcriptional regulation, DNA replication and probably DNA repair. This chain is Actin-like protein 6A (Actl6a), found in Mus musculus (Mouse).